The following is a 270-amino-acid chain: Phosphatidylglycerol--prolipoprotein diacylglyceryl transferase (270 aa).

The next 7 helical transmembrane spans lie at 17–37 (LAIR…LWFG), 59–79 (MLFY…VLFY), 95–115 (WEGG…MWVF), 129–149 (FIAP…FING), 175–195 (PSQL…LWLF), 202–222 (MGAV…LAEF), and 237–257 (LSMG…MVVW). Arg142 is a binding site for a 1,2-diacyl-sn-glycero-3-phospho-(1'-sn-glycerol).

It belongs to the Lgt family.

Its subcellular location is the cell inner membrane. It carries out the reaction L-cysteinyl-[prolipoprotein] + a 1,2-diacyl-sn-glycero-3-phospho-(1'-sn-glycerol) = an S-1,2-diacyl-sn-glyceryl-L-cysteinyl-[prolipoprotein] + sn-glycerol 1-phosphate + H(+). Its pathway is protein modification; lipoprotein biosynthesis (diacylglyceryl transfer). In terms of biological role, catalyzes the transfer of the diacylglyceryl group from phosphatidylglycerol to the sulfhydryl group of the N-terminal cysteine of a prolipoprotein, the first step in the formation of mature lipoproteins. The sequence is that of Phosphatidylglycerol--prolipoprotein diacylglyceryl transferase from Cupriavidus metallidurans (strain ATCC 43123 / DSM 2839 / NBRC 102507 / CH34) (Ralstonia metallidurans).